The sequence spans 304 residues: Aspartate carbamoyltransferase catalytic subunit (304 aa).

Residues R49 and T50 each coordinate carbamoyl phosphate. An L-aspartate-binding site is contributed by K77. R99, H127, and Q130 together coordinate carbamoyl phosphate. The L-aspartate site is built by R160 and R211. Carbamoyl phosphate contacts are provided by A252 and P253.

Belongs to the aspartate/ornithine carbamoyltransferase superfamily. ATCase family. As to quaternary structure, heterododecamer (2C3:3R2) of six catalytic PyrB chains organized as two trimers (C3), and six regulatory PyrI chains organized as three dimers (R2).

The catalysed reaction is carbamoyl phosphate + L-aspartate = N-carbamoyl-L-aspartate + phosphate + H(+). It functions in the pathway pyrimidine metabolism; UMP biosynthesis via de novo pathway; (S)-dihydroorotate from bicarbonate: step 2/3. Its function is as follows. Catalyzes the condensation of carbamoyl phosphate and aspartate to form carbamoyl aspartate and inorganic phosphate, the committed step in the de novo pyrimidine nucleotide biosynthesis pathway. This chain is Aspartate carbamoyltransferase catalytic subunit, found in Bacillus cytotoxicus (strain DSM 22905 / CIP 110041 / 391-98 / NVH 391-98).